The chain runs to 88 residues: Homeobox protein knotted-1-like 1 (88 aa).

The ELK domain maps to 4–24 (ELKLELKQGFKSRIEDVREEI). The homeobox; TALE-type DNA-binding region spans 25–88 (LRKRRAGKLP…NQRKRNWHNN (64 aa)).

Belongs to the TALE/KNOX homeobox family. As to expression, highly expressed in the roots.

It localises to the nucleus. This Zea mays (Maize) protein is Homeobox protein knotted-1-like 1 (KNOX1).